The following is a 256-amino-acid chain: Probable galactose dehydrogenase GalD (256 aa).

NAD(+) contacts are provided by residues 20 to 23 (GGGS), 71 to 72 (DL), and Asn-98. Residue Ser-150 participates in substrate binding. The active-site Proton acceptor is the Tyr-163. NAD(+)-binding positions include 163 to 167 (YSTAK) and Ile-196.

The protein belongs to the short-chain dehydrogenases/reductases (SDR) family.

Functionally, involved in the degradation of galactose via the DeLey-Doudoroff pathway. Catalyzes the oxidation of galactose in the presence of NAD(+). Uses NAD(+) as a hydrogen acceptor more efficiently than NADP(+). The polypeptide is Probable galactose dehydrogenase GalD (galD) (Rhizobium meliloti (strain 1021) (Ensifer meliloti)).